Reading from the N-terminus, the 285-residue chain is Golgi phosphoprotein 3-like (285 aa).

The interval 1–43 (MTTLTHRTRRTEVSKSCEKKIESEEDTNQERSPDNEDPGDSKD) is disordered. Residues 10–43 (RTEVSKSCEKKIESEEDTNQERSPDNEDPGDSKD) are compositionally biased toward basic and acidic residues. 2 residues coordinate a 1,2-diacyl-sn-glycero-3-phospho-(1D-myo-inositol 4-phosphate): Trp-67 and Arg-76. Ser-112 carries the post-translational modification Phosphoserine. 2 residues coordinate a 1,2-diacyl-sn-glycero-3-phospho-(1D-myo-inositol 4-phosphate): Arg-157 and Arg-160. The tract at residues 176–187 (EKQNFLLFDMTT) is beta-hairpin required for oligomerization.

It belongs to the GOLPH3/VPS74 family. As to quaternary structure, homooligomer. Does not interact MYO18; differs from GOLPH3 by its inability to interact with MYO18. May interact with ARF1.

It localises to the golgi apparatus. Its subcellular location is the golgi stack membrane. The protein localises to the trans-Golgi network membrane. Phosphatidylinositol-4-phosphate-binding protein that may antagonize the action of GOLPH3 which is required for the process of vesicle budding at the Golgi and anterograde transport to the plasma membrane. The chain is Golgi phosphoprotein 3-like (Golph3l) from Rattus norvegicus (Rat).